Here is a 209-residue protein sequence, read N- to C-terminus: Response regulator protein VraR (209 aa).

In terms of domain architecture, Response regulatory spans 4–120 (KVLFVDDHEM…DIADAVRKTS (117 aa)). Residue Asp55 is modified to 4-aspartylphosphate. In terms of domain architecture, HTH luxR-type spans 141–206 (RAELYEMLTE…QAVIYAFQHN (66 aa)). The segment at residues 165-184 (NQEIASASHITIKTVKTHVS) is a DNA-binding region (H-T-H motif).

Homodimer. Phosphorylated by VraS. Phosphorylation state of VraR controls dimerization of the protein.

Its function is as follows. Member of the two-component regulatory system VraS/VraR involved in the control of the cell wall peptidoglycan biosynthesis. Upon cellular stress, the histidine kinase VraS transfers the phosphoryl group onto VraR. Upon phosphorylation, VraR dimerizes at the N-terminal domain. In turn, phosphorylation-induced dimerization expand and enhance the VraR binding to its own promoter leading to increased expression and subsequent modulation of as many as 40 genes, which ultimately constitute the S.aureus response to cell wall damage. In addition, inhibits the host autophagic flux and delays the early stage of autophagosome formation, thereby promoting bacterial survival. Facilitates the ability of S.aureus to resist host polymorphonuclear leukocytes-mediated phagocytosis and killing thus contributing to immune evasion. The chain is Response regulator protein VraR (vraR) from Staphylococcus aureus (strain NCTC 8325 / PS 47).